The primary structure comprises 181 residues: SecB-like chaperone MT2006 (181 aa).

Belongs to the SecB-like family. In terms of assembly, homotetramer, interacts with antitoxin HigA1.

Its function is as follows. Chaperone component of an atypical, type II toxin-antitoxin chaperone (TAC) module, probably required for antitoxin HigA1 to neutralize its cognate toxin HigB1. This chain is SecB-like chaperone MT2006 (secBL), found in Mycobacterium tuberculosis (strain CDC 1551 / Oshkosh).